We begin with the raw amino-acid sequence, 316 residues long: Phosphatidylinositol mannoside acyltransferase (316 aa).

Catalysis depends on His-137, which acts as the Proton acceptor. The hexadecanoyl-CoA site is built by His-137 and Arg-175. The active site involves Glu-211. Glu-240 lines the hexadecanoyl-CoA pocket.

Belongs to the LpxL/LpxM/LpxP family.

The protein resides in the cell inner membrane. The catalysed reaction is a 2,6-O-bis(alpha-D-mannopyranosyl)-1-phosphatidyl-1D-myo-inositol + an acyl-CoA = a 2-O-(alpha-D-mannosyl)-6-O-(6-O-acyl-alpha-D-mannosyl)-1-phosphatidyl-1D-myo-inositol + CoA. The enzyme catalyses a 1,2-diacyl-sn-glycero-3-phospho-[alpha-D-mannopyranosyl-(1&lt;-&gt;6)-D-myo-inositol] + an acyl-CoA = a 1,2-diacyl-sn-glycero-3-phospho-[alpha-D-6-acyl-mannopyranosyl-(1&lt;-&gt;6)-D-myo-inositol] + CoA. It participates in phospholipid metabolism; phosphatidylinositol metabolism. Its function is as follows. Catalyzes the transfer of a palmitoyl moiety from palmitoyl-CoA to the 6-position of the mannose ring linked to the 2-position of myo-inositol in phosphatidyl-myo-inositol monomannoside (PIM1) or dimannoside (PIM2). This Mycobacterium tuberculosis (strain CDC 1551 / Oshkosh) protein is Phosphatidylinositol mannoside acyltransferase.